Here is a 161-residue protein sequence, read N- to C-terminus: 6,7-dimethyl-8-ribityllumazine synthase (161 aa).

Residues tryptophan 31, 63–65, and 85–87 contribute to the 5-amino-6-(D-ribitylamino)uracil site; these read SFE and VVI. 90 to 91 is a binding site for (2S)-2-hydroxy-3-oxobutyl phosphate; sequence GT. Histidine 93 (proton donor) is an active-site residue. 5-amino-6-(D-ribitylamino)uracil is bound at residue phenylalanine 118. Arginine 132 is a (2S)-2-hydroxy-3-oxobutyl phosphate binding site.

This sequence belongs to the DMRL synthase family.

The catalysed reaction is (2S)-2-hydroxy-3-oxobutyl phosphate + 5-amino-6-(D-ribitylamino)uracil = 6,7-dimethyl-8-(1-D-ribityl)lumazine + phosphate + 2 H2O + H(+). The protein operates within cofactor biosynthesis; riboflavin biosynthesis; riboflavin from 2-hydroxy-3-oxobutyl phosphate and 5-amino-6-(D-ribitylamino)uracil: step 1/2. Functionally, catalyzes the formation of 6,7-dimethyl-8-ribityllumazine by condensation of 5-amino-6-(D-ribitylamino)uracil with 3,4-dihydroxy-2-butanone 4-phosphate. This is the penultimate step in the biosynthesis of riboflavin. The protein is 6,7-dimethyl-8-ribityllumazine synthase of Pseudarthrobacter chlorophenolicus (strain ATCC 700700 / DSM 12829 / CIP 107037 / JCM 12360 / KCTC 9906 / NCIMB 13794 / A6) (Arthrobacter chlorophenolicus).